The primary structure comprises 591 residues: MLKYKPLLKISKNCEAAILRASKTRLNTIRAYGSTVPKSKSFEQDSRKRTQSWTALRVGAILAATSSVAYLNWHNGQIDNEPKLDMNKQKISPAEVAKHNKPDDCWVVINGYVYDLTRFLPNHPGGQDVIKFNAGKDVTAIFEPLHAPNVIDKYIAPEKKLGPLQGSMPPELVCPPYAPGETKEDIARKEQLKSLLPPLDNIINLYDFEYLASQTLTKQAWAYYSSGANDEVTHRENHNAYHRIFFKPKILVDVRKVDISTDMLGSHVDVPFYVSATALCKLGNPLEGEKDVARGCGQGVTKVPQMISTLASCSPEEIIEAAPSDKQIQWYQLYVNSDRKITDDLVKNVEKLGVKALFVTVDAPSLGQREKDMKLKFSNTKAGPKAMKKTNVEESQGASRALSKFIDPSLTWKDIEELKKKTKLPIVIKGVQRTEDVIKAAEIGVSGVVLSNHGGRQLDFSRAPIEVLAETMPILEQRNLKDKLEVFVDGGVRRGTDVLKALCLGAKGVGLGRPFLYANSCYGRNGVEKAIEILRDEIEMSMRLLGVTSIAELKPDLLDLSTLKARTVGVPNDVLYNEVYEGPTLTEFEDA.

The N-terminal 80 residues, 1–80, are a transit peptide targeting the mitochondrion; the sequence is MLKYKPLLKI…LNWHNGQIDN (80 aa). Residues 88–165 form the Cytochrome b5 heme-binding domain; it reads KQKISPAEVA…APEKKLGPLQ (78 aa). The heme b site is built by H123, H146, Y177, Q219, and Y223. The 367-residue stretch at 197 to 563 folds into the FMN hydroxy acid dehydrogenase domain; that stretch reads PPLDNIINLY…KPDLLDLSTL (367 aa). Residue Y223 participates in pyruvate binding. FMN contacts are provided by residues 275–278, S308, and Q332; that span reads SATA. Y334 is a pyruvate binding site. T360 contacts FMN. K376 is a binding site for heme b. Residue K429 participates in FMN binding. Residues H453 and R456 each contribute to the pyruvate site. The active-site Proton acceptor is H453. FMN is bound by residues 489-493 and 512-513; these read DGGVR and GR.

It in the N-terminal section; belongs to the cytochrome b5 family. The protein in the C-terminal section; belongs to the FMN-dependent alpha-hydroxy acid dehydrogenase family. In terms of assembly, homotetramer. The cofactor is FMN. Heme b serves as cofactor.

It is found in the mitochondrion intermembrane space. It catalyses the reaction (S)-lactate + 2 Fe(III)-[cytochrome c] = 2 Fe(II)-[cytochrome c] + pyruvate + 2 H(+). In terms of biological role, catalyzes the oxidation of (S)-lactate (L-lactate) to pyruvate with subsequent transfer of electrons to cytochrome c. Is involved in the utilization of (S)-lactate as a sole source of carbon for growth. Can also use ferricyanide as an electron acceptor in vitro. The chain is L-lactate dehydrogenase (cytochrome) (CYB2) from Saccharomyces cerevisiae (strain ATCC 204508 / S288c) (Baker's yeast).